We begin with the raw amino-acid sequence, 83 residues long: Cytochrome c oxidase subunit 12, mitochondrial (83 aa).

The 44-residue stretch at 24 to 67 (TKHCWQSYVDYHKCVNMKGEDFAPCKVFWKTYNALCPLDWIEKW) folds into the CHCH domain. The short motif at 27-37 (CWQSYVDYHKC) is the Cx9C motif element. 2 disulfides stabilise this stretch: C27–C59 and C37–C48. Positions 48–59 (CKVFWKTYNALC) match the Cx10C motif motif. S82 is subject to Phosphoserine.

Belongs to the cytochrome c oxidase subunit 6B family. In terms of assembly, component of the cytochrome c oxidase (complex IV, CIV), a multisubunit enzyme composed of 12 subunits. The complex is composed of a catalytic core of 3 subunits COX1, COX2 and COX3, encoded in the mitochondrial DNA, and 9 supernumerary subunits COX4, COX5A (or COX5B), COX6, COX7, COX8, COX9, COX12, COX13 and COX26, which are encoded in the nuclear genome. The complex exists as a monomer or a dimer and forms supercomplexes (SCs) in the inner mitochondrial membrane with a dimer of ubiquinol-cytochrome c oxidoreductase (cytochrome b-c1 complex, complex III, CIII), resulting in 2 different assemblies (supercomplexes III(2)IV and III(2)IV(2)).

It localises to the mitochondrion inner membrane. It participates in energy metabolism; oxidative phosphorylation. Component of the cytochrome c oxidase, the last enzyme in the mitochondrial electron transport chain which drives oxidative phosphorylation. The respiratory chain contains 3 multisubunit complexes succinate dehydrogenase (complex II, CII), ubiquinol-cytochrome c oxidoreductase (cytochrome b-c1 complex, complex III, CIII) and cytochrome c oxidase (complex IV, CIV), that cooperate to transfer electrons derived from NADH and succinate to molecular oxygen, creating an electrochemical gradient over the inner membrane that drives transmembrane transport and the ATP synthase. Cytochrome c oxidase is the component of the respiratory chain that catalyzes the reduction of oxygen to water. Electrons originating from reduced cytochrome c in the intermembrane space (IMS) are transferred via the dinuclear copper A center (CU(A)) of COX2 and heme A of COX1 to the active site in COX1, a binuclear center (BNC) formed by heme A3 and copper B (CU(B)). The BNC reduces molecular oxygen to 2 water molecules unsing 4 electrons from cytochrome c in the IMS and 4 protons from the mitochondrial matrix. In Saccharomyces cerevisiae (strain ATCC 204508 / S288c) (Baker's yeast), this protein is Cytochrome c oxidase subunit 12, mitochondrial (COX12).